Here is a 1819-residue protein sequence, read N- to C-terminus: Gamma-tubulin complex component 6 (1819 aa).

3 disordered regions span residues 810–889 (SEAH…GARP), 929–951 (LPPS…PQEY), and 1000–1023 (RETL…QPTE). 9 tandem repeats follow at residues 1027–1053 (GQVS…WNTH), 1054–1080 (GHVS…WNTH), 1081–1107 (GHVS…WNIH), 1108–1134 (GHVS…WNTH), 1135–1161 (GHVS…WNTH), 1162–1188 (GHVS…WNTH), 1189–1215 (GHVS…WNTH), 1216–1242 (GHVS…CNTH), and 1243–1269 (GHVS…WNTH). Residues 1027–1269 (GQVSGGGLPT…VSTRPRWNTH (243 aa)) are 9 X 27 AA tandem repeats. Positions 1271-1412 (PIPPPHMVLG…EAEASAAEAQ (142 aa)) are disordered. The segment covering 1297-1314 (PPGHTSQSALSLGAQSTV) has biased composition (polar residues). Residues 1321–1335 (LPVEVGPSLSSPSSG) are compositionally biased toward low complexity. Residues 1384 to 1398 (WPLNSQEDTAAQSSP) show a composition bias toward polar residues.

The protein belongs to the TUBGCP family. As to quaternary structure, component of the gamma-tubulin ring complex (gTuRC) consisting of TUBGCP2, TUBGCP3, TUBGCP4, TUBGCP5 and TUBGCP6 and gamma-tubulin TUBG1 or TUBG2. TUBGCP2, TUBGCP3, TUBGCP4, TUBGCP5 and TUBGCP6 assemble in a 5:5:2:1:1 stoichiometry; each is associated with a gamma-tubulin, thereby arranging 14 gamma-tubulins in a helical manner. Gamma-tubulin at the first position is blocked by TUBGCP3 at the last position, allowing 13 protafilaments to grow into a microtubule. The gTuRC (via TUBGCP3 and TUBGCP6) interacts with ACTB and MZT1; the interactions form a luminal bridge that stabilizes the initial structure during complex assembly. The gTuRC (via TUBGCP2) interacts with MZT2A/MZT2B and CDK5RAP2 (via CM1 motif); the interactions play a role in gTuRC activation.

The protein localises to the cytoplasm. Its subcellular location is the cytoskeleton. The protein resides in the microtubule organizing center. It is found in the centrosome. Functionally, component of the gamma-tubulin ring complex (gTuRC) which mediates microtubule nucleation. The gTuRC regulates the minus-end nucleation of alpha-beta tubulin heterodimers that grow into microtubule protafilaments, a critical step in centrosome duplication and spindle formation. The sequence is that of Gamma-tubulin complex component 6 (TUBGCP6) from Homo sapiens (Human).